Consider the following 80-residue polypeptide: Type VII secretion system accessory factor EsaB (80 aa).

Belongs to the EsaB family.

It localises to the cytoplasm. Seems to regulate secreted factors that contribute to the establishment of persistent infections in the host. This Staphylococcus aureus (strain COL) protein is Type VII secretion system accessory factor EsaB.